The following is a 198-amino-acid chain: Large ribosomal subunit protein bL25 (198 aa).

Belongs to the bacterial ribosomal protein bL25 family. CTC subfamily. Part of the 50S ribosomal subunit; part of the 5S rRNA/L5/L18/L25 subcomplex. Contacts the 5S rRNA. Binds to the 5S rRNA independently of L5 and L18.

Functionally, this is one of the proteins that binds to the 5S RNA in the ribosome where it forms part of the central protuberance. The sequence is that of Large ribosomal subunit protein bL25 from Lysinibacillus sphaericus (strain C3-41).